Here is a 436-residue protein sequence, read N- to C-terminus: Chorismate synthase, chloroplastic (436 aa).

Residues 1 to 24 are disordered; the sequence is MASSSLTSKSILGSTKLGSSSLPS. Residues 1 to 50 constitute a chloroplast transit peptide; sequence MASSSLTSKSILGSTKLGSSSLPSELRRLSSPAVQISLRTQTRKNFQIQA.

Belongs to the chorismate synthase family. Homotetramer. FMNH2 serves as cofactor.

The protein resides in the plastid. It localises to the chloroplast. The enzyme catalyses 5-O-(1-carboxyvinyl)-3-phosphoshikimate = chorismate + phosphate. Its pathway is metabolic intermediate biosynthesis; chorismate biosynthesis; chorismate from D-erythrose 4-phosphate and phosphoenolpyruvate: step 7/7. Its function is as follows. Catalyzes the last common step of the biosynthesis of aromatic amino acids, produced via the shikimic acid pathway. The polypeptide is Chorismate synthase, chloroplastic (EMB1144) (Arabidopsis thaliana (Mouse-ear cress)).